We begin with the raw amino-acid sequence, 444 residues long: Serine carboxypeptidase-like 50 (444 aa).

Residues 1 to 22 (MEQATTLFILLSTLLLAVSVES) form the signal peptide. Cys79 and Cys308 are joined by a disulfide. Ser170 is an active-site residue. An N-linked (GlcNAc...) asparagine glycan is attached at Asn263. The active site involves Asp345. Asn361 carries an N-linked (GlcNAc...) asparagine glycan. Residue His403 is part of the active site.

Belongs to the peptidase S10 family. In terms of tissue distribution, ubiquitous.

It localises to the secreted. Its function is as follows. Probable carboxypeptidase. This Arabidopsis thaliana (Mouse-ear cress) protein is Serine carboxypeptidase-like 50 (SCPL50).